The chain runs to 250 residues: Ribonuclease PH (250 aa).

Phosphate contacts are provided by residues Arg-99 and Gly-137–Arg-139.

It belongs to the RNase PH family. Homohexameric ring arranged as a trimer of dimers.

It carries out the reaction tRNA(n+1) + phosphate = tRNA(n) + a ribonucleoside 5'-diphosphate. Phosphorolytic 3'-5' exoribonuclease that plays an important role in tRNA 3'-end maturation. Removes nucleotide residues following the 3'-CCA terminus of tRNAs; can also add nucleotides to the ends of RNA molecules by using nucleoside diphosphates as substrates, but this may not be physiologically important. Probably plays a role in initiation of 16S rRNA degradation (leading to ribosome degradation) during starvation. This Bordetella parapertussis (strain 12822 / ATCC BAA-587 / NCTC 13253) protein is Ribonuclease PH.